The sequence spans 122 residues: MGTKKPFRIKKTSDFQRVFAKHKSFANRYFVVYSDTQPKEVDVSHWRIGLSVSKKIGKAHERVWVKRRISESFNNISLFIPNNLDIVIVARPLVKGQKQKIIQDQLMHVLDLAGILNGKEKN.

The protein belongs to the RnpA family. Consists of a catalytic RNA component (M1 or rnpB) and a protein subunit.

The catalysed reaction is Endonucleolytic cleavage of RNA, removing 5'-extranucleotides from tRNA precursor.. Its function is as follows. RNaseP catalyzes the removal of the 5'-leader sequence from pre-tRNA to produce the mature 5'-terminus. It can also cleave other RNA substrates such as 4.5S RNA. The protein component plays an auxiliary but essential role in vivo by binding to the 5'-leader sequence and broadening the substrate specificity of the ribozyme. The polypeptide is Ribonuclease P protein component (Oenococcus oeni (strain ATCC BAA-331 / PSU-1)).